A 95-amino-acid chain; its full sequence is Signal recognition particle 19 kDa protein (95 aa).

The protein belongs to the SRP19 family. In terms of assembly, part of the signal recognition particle protein translocation system, which is composed of SRP and FtsY. Archaeal SRP consists of a 7S RNA molecule of 300 nucleotides and two protein subunits: SRP54 and SRP19.

Its subcellular location is the cytoplasm. Its function is as follows. Involved in targeting and insertion of nascent membrane proteins into the cytoplasmic membrane. Binds directly to 7S RNA and mediates binding of the 54 kDa subunit of the SRP. The sequence is that of Signal recognition particle 19 kDa protein from Staphylothermus marinus (strain ATCC 43588 / DSM 3639 / JCM 9404 / F1).